Reading from the N-terminus, the 489-residue chain is MKYHDLRDFLTLLEQQGELKRITLPVDPHLEITEIADRTLRAGGPALLFENPKGYAMPVLCNLFGTPKRVAMGMGQDDVSALREVGKLLAFLKEPEPPKGFRDLFDKLPQFKQVLNMPTKRLRGAPCQQKIASGDDVDLTRLPVMTCWPDDAAPLITWGLTVTRGPHKERQNLGIYRQQLIGKNKLIMRWLSHRGGALDFQEWLAARPGERFPVSVALGADPATILGAVTPVPDTLSEYAFAGLLRGTKTEVVKCLSNDLEAPASAEIILEGYIEPGEMAPEGPYGDHTGYYNEVDNFPVFTVTHITQREDAIYHSTYTGRPPDEPAVLGVALNEVFVPILQKQFPEIVDFYLPPEGCSYRLAVVTMKKQYAGHAKRVMMGVWSFLRQFMYTKFVIVCDDDVNARDWNDVIWAITTRMDPARDTVLVENTPIDYLDFASPVSGLGSKMGLDATNKWPGETQREWGRPIVKDPEVTARIDAIWDELAIFK.

N172 serves as a coordination point for Mn(2+). Prenylated FMN-binding positions include 175–177, 189–191, and 194–195; these read IYR, RWL, and RG. E238 provides a ligand contact to Mn(2+). D287 (proton donor) is an active-site residue.

It belongs to the UbiD family. Homohexamer. Prenylated FMN is required as a cofactor. Requires Mn(2+) as cofactor.

Its subcellular location is the cell membrane. The enzyme catalyses a 4-hydroxy-3-(all-trans-polyprenyl)benzoate + H(+) = a 2-(all-trans-polyprenyl)phenol + CO2. The protein operates within cofactor biosynthesis; ubiquinone biosynthesis. In terms of biological role, catalyzes the decarboxylation of 3-octaprenyl-4-hydroxy benzoate to 2-octaprenylphenol, an intermediate step in ubiquinone biosynthesis. In Salmonella paratyphi B (strain ATCC BAA-1250 / SPB7), this protein is 3-octaprenyl-4-hydroxybenzoate carboxy-lyase.